The following is a 162-amino-acid chain: Large ribosomal subunit protein uL10 (162 aa).

It belongs to the universal ribosomal protein uL10 family. Part of the ribosomal stalk of the 50S ribosomal subunit. The N-terminus interacts with L11 and the large rRNA to form the base of the stalk. The C-terminus forms an elongated spine to which L12 dimers bind in a sequential fashion forming a multimeric L10(L12)X complex.

Functionally, forms part of the ribosomal stalk, playing a central role in the interaction of the ribosome with GTP-bound translation factors. This is Large ribosomal subunit protein uL10 from Borreliella afzelii (strain PKo) (Borrelia afzelii).